The sequence spans 265 residues: UPF0354 protein BH3252 (265 aa).

The protein belongs to the UPF0354 family.

The polypeptide is UPF0354 protein BH3252 (Halalkalibacterium halodurans (strain ATCC BAA-125 / DSM 18197 / FERM 7344 / JCM 9153 / C-125) (Bacillus halodurans)).